The sequence spans 221 residues: Transmembrane protein 225B (221 aa).

Transmembrane regions follow at residues 14–34 (WAIV…VSIF), 77–97 (VFLL…MPFA), 109–129 (FVLA…LVLH), and 147–167 (VLWP…AGTI).

The protein resides in the membrane. This chain is Transmembrane protein 225B, found in Homo sapiens (Human).